The primary structure comprises 292 residues: Keratin-associated protein 10-9 (292 aa).

25 repeat units span residues 26-30 (CCEPP), 31-35 (CCATS), 36-40 (CCAPA), 57-61 (CCQVT), 79-83 (CCQQS), 99-103 (CCVPV), 104-108 (CCKPV), 109-113 (CCVPV), 114-118 (CCGAS), 120-124 (CCQQS), 130-134 (CCASS), 140-144 (CCVPV), 145-149 (CCKPV), 150-154 (CCAPT), 162-166 (CCQQS), 172-176 (CCTSS), 182-186 (YCVPV), 187-191 (CCKPV), 192-196 (CCKPI), 197-201 (CCVPV), 209-213 (CCQQS), 219-223 (CCTTS), 224-228 (CCRPS), 243-247 (CCVPV), and 250-254 (CCAPT). The 25 X 5 AA repeats of C-C-X(3) stretch occupies residues 26–254 (CCEPPCCATS…VPVSSCCAPT (229 aa)).

It belongs to the KRTAP type 10 family. As to quaternary structure, interacts with hair keratins. As to expression, restricted to a narrow region of the hair fiber cuticle, lying approximately 20 cell layers above the apex of the dermal papilla of the hair root; not detected in any other tissues.

In the hair cortex, hair keratin intermediate filaments are embedded in an interfilamentous matrix, consisting of hair keratin-associated proteins (KRTAP), which are essential for the formation of a rigid and resistant hair shaft through their extensive disulfide bond cross-linking with abundant cysteine residues of hair keratins. The matrix proteins include the high-sulfur and high-glycine-tyrosine keratins. The sequence is that of Keratin-associated protein 10-9 (KRTAP10-9) from Homo sapiens (Human).